Reading from the N-terminus, the 265-residue chain is 3-methyl-2-oxobutanoate hydroxymethyltransferase (265 aa).

Mg(2+)-binding residues include aspartate 45 and aspartate 84. Residues 45–46 (DS), aspartate 84, and lysine 112 contribute to the 3-methyl-2-oxobutanoate site. Residue glutamate 114 participates in Mg(2+) binding. Glutamate 181 serves as the catalytic Proton acceptor.

It belongs to the PanB family. Homodecamer; pentamer of dimers. It depends on Mg(2+) as a cofactor.

The protein localises to the cytoplasm. It carries out the reaction 3-methyl-2-oxobutanoate + (6R)-5,10-methylene-5,6,7,8-tetrahydrofolate + H2O = 2-dehydropantoate + (6S)-5,6,7,8-tetrahydrofolate. Its pathway is cofactor biosynthesis; (R)-pantothenate biosynthesis; (R)-pantoate from 3-methyl-2-oxobutanoate: step 1/2. Functionally, catalyzes the reversible reaction in which hydroxymethyl group from 5,10-methylenetetrahydrofolate is transferred onto alpha-ketoisovalerate to form ketopantoate. This Yersinia pseudotuberculosis serotype O:1b (strain IP 31758) protein is 3-methyl-2-oxobutanoate hydroxymethyltransferase.